Consider the following 102-residue polypeptide: Scorpine-like-2 (102 aa).

An N-terminal signal peptide occupies residues 1–19 (MQTQCTVLQLLVLVALCSC). Positions 63–102 (QQLCLIVDTVQWCNKSCLAAENKEGYCHGTKCKCGIKVSY) constitute a BetaSPN-type CS-alpha/beta domain. Intrachain disulfides connect Cys66-Cys89, Cys75-Cys94, and Cys79-Cys96.

The protein belongs to the long chain scorpion toxin family. Class 3 subfamily. As to expression, expressed by the venom gland.

It is found in the secreted. In terms of biological role, inhibits voltage-gated potassium channels. This Urodacus yaschenkoi (Inland robust scorpion) protein is Scorpine-like-2.